Here is a 733-residue protein sequence, read N- to C-terminus: DNA repair and recombination protein RAD54-like (733 aa).

Residues 1–35 (LAKRKAGGEEEDGEWRPPATQKRQKAGSEAESADC) form a disordered region. Residues 159–334 (SRRIPGSHGC…FSLVHFVNSG (176 aa)) enclose the Helicase ATP-binding domain. 172–179 (DEMGLGKT) is an ATP binding site. A DEGH box motif is present at residues 285–288 (DEGH). In terms of domain architecture, Helicase C-terminal spans 488 to 642 (LVLDYILAVT…CVVDEEQDVE (155 aa)). K504 bears the N6-acetyllysine mark. S561 is modified (phosphoserine; by NEK1).

This sequence belongs to the SNF2/RAD54 helicase family. Homohexamer. Interacts (via N-terminus) with RAD51. Interacts with NAP1L1. Interacts with BRD9; this interaction orchestrates RAD51-RAD54 complex formation. Acetylated. Acetylation promotes interaction with BRD9, and subsequently with RAD54, which is essential for homologous recombination (HR). Post-translationally, phosphorylated. Phosphorylation at Ser-561 by NEK1 specifically in G2 phase allows efficient removal of RAD51 filaments from DNA. In terms of tissue distribution, highly expressed in bursa, thymus, testis, and ovary. Low level of expression seen in all other organs tested.

The protein resides in the nucleus. Functionally, plays an essential role in homologous recombination (HR) which is a major pathway for repairing DNA double-strand breaks (DSBs), single-stranded DNA (ssDNA) gaps, and stalled or collapsed replication forks. Acts as a molecular motor during the homology search and guides RAD51 ssDNA along a donor dsDNA thereby changing the homology search from the diffusion-based mechanism to a motor-guided mechanism. Plays also an essential role in RAD51-mediated synaptic complex formation which consists of three strands encased in a protein filament formed once homology is recognized. Once DNA strand exchange occured, dissociates RAD51 from nucleoprotein filaments formed on dsDNA. This is DNA repair and recombination protein RAD54-like (RAD54L) from Gallus gallus (Chicken).